Reading from the N-terminus, the 346-residue chain is uncharacterized protein (346 aa).

His65 is a binding site for Zn(2+). The active site involves Asp67. Asp89 lines the Zn(2+) pocket. Glu115 acts as the Proton acceptor in catalysis. Zn(2+) is bound by residues Glu116, Glu145, and His319.

It belongs to the peptidase M20A family. Zn(2+) serves as cofactor. The cofactor is Co(2+).

This is an uncharacterized protein from Methanocaldococcus jannaschii (strain ATCC 43067 / DSM 2661 / JAL-1 / JCM 10045 / NBRC 100440) (Methanococcus jannaschii).